The primary structure comprises 118 residues: MIPGELRVNDDLGQIELNVGRTTQTLSVANYGDRPIQVGSHYHFYEVNEALHFDREATKGFRLNIPAGMAIRFEPGQRRTIELVEFAGKREIYGFQAAIMGNVDKHITTTIPDDKEVK.

The protein belongs to the urease beta subunit family. As to quaternary structure, heterotrimer of UreA (gamma), UreB (beta) and UreC (alpha) subunits. Three heterotrimers associate to form the active enzyme.

It is found in the cytoplasm. It carries out the reaction urea + 2 H2O + H(+) = hydrogencarbonate + 2 NH4(+). It participates in nitrogen metabolism; urea degradation; CO(2) and NH(3) from urea (urease route): step 1/1. The protein is Urease subunit beta of Aliivibrio fischeri (strain ATCC 700601 / ES114) (Vibrio fischeri).